A 407-amino-acid chain; its full sequence is Zinc finger protein 260 (407 aa).

A disordered region spans residues 1–21 (MLESLQPESELLHDEPDPGEK). Over residues 10 to 21 (ELLHDEPDPGEK) the composition is skewed to basic and acidic residues. The C2H2-type 1 zinc-finger motif lies at 23–45 (YECDECRKTFSLEQHFVEHKKTH). The C2H2-type 2; degenerate zinc-finger motif lies at 51 to 73 (PECTGCGEEFSKASSLTRHLRSR). C2H2-type zinc fingers lie at residues 79–101 (YKCGNCGRTFSQRGNFLSHQKQH), 131–153 (YACKECGKAFNGKSYLKEHEKIH), 159–181 (FECNQCGRAFSQKQYLIKHQNVH), 187–209 (FKCNECGKAFSQKENLIIHQRIH), 215–237 (YECKGCGKAFIQKSSLIRHQRSH), 243–265 (YTCKECGKAFSGKSNLTEHEKIH), 271–293 (YKCNECGTIFRQKQYLIKHHNIH), 299–321 (YECNKCGKAFSRITSLIVHVRIH), 327–349 (YECKVCGKAFCQSSSLTVHMRSH), 355–377 (YGCNECGKAFSQFSTLALHMRIH), and 383–405 (YQCSECGKAFSQKSHHIRHQRIH).

It belongs to the krueppel C2H2-type zinc-finger protein family. Binds DNA. Interacts with GATA4. As to expression, expressed in both embryonic, fetal and adult heart. Also expressed in lung, skeletal muscle and adrenal glands.

Its subcellular location is the nucleus. Its function is as follows. Transcription factor that acts as a cardiac regulator and an effector of alpha1-adrenergic signaling. Binds to PE response elements (PERE) present in the promoter of genes such as ANF/NPPA and acts as a direct transcriptional activator of NPPA. Also acts as a cofactor with GATA4, a key cardiac regulator. The protein is Zinc finger protein 260 (Znf260) of Rattus norvegicus (Rat).